Consider the following 413-residue polypeptide: Prophage integrase IntA (413 aa).

One can recognise a Core-binding (CB) domain in the interval 105 to 186 (NTFLLVAERW…RINEVMIYAQ (82 aa)). The region spanning 209-386 (KNMPSIRPDQ…DYLEQRRPMM (178 aa)) is the Tyr recombinase domain. Catalysis depends on residues arginine 248, lysine 275, histidine 337, arginine 340, and histidine 363. Tyrosine 373 serves as the catalytic O-(3'-phospho-DNA)-tyrosine intermediate.

The protein belongs to the 'phage' integrase family.

In terms of biological role, integrase is necessary for integration of the phage into the host genome by site-specific recombination. In conjunction with excisionase, integrase is also necessary for excision of the prophage from the host genome. Part of the cryptic P4-like prophage CP4-57, it excises the prophage when overexpressed, which also requires integration host factor (encoded by ihfA and ihfB). Overexpression of AlpA leads to excision of the CP4-57 prophage, which inactivates ssrA (the gene upstream of the prophage) that encodes tmRNA which is required to rescue stalled ribosomes in a process known as trans-translation. The chain is Prophage integrase IntA (intA) from Escherichia coli (strain K12).